We begin with the raw amino-acid sequence, 523 residues long: Calcium and calcium/calmodulin-dependent serine/threonine-protein kinase DMI-3 (523 aa).

Residues 12–306 form the Protein kinase domain; sequence YEVSEILGRG…ALELLSDPWV (295 aa). ATP is bound by residues 18 to 26 and Lys-47; that span reads LGRGGFSVV. Asp-171 (proton acceptor) is an active-site residue. The residue at position 271 (Thr-271) is a Phosphothreonine. Residues 329-342 are calmodulin-binding; it reads ARRKLRAAAIASVW. EF-hand domains are found at residues 400 to 435, 436 to 471, and 478 to 513; these read SLIPFASRIFDLFDNNRDGTVDMREILCGFSSLKNS, KGEDALRLCFQMYDTDRSGCISKEEVASMLRALPYD, and TEPGKLDEIFDLMDANNDGKVTFDEFKAAMQRDSSL. Positions 413, 415, 417, 419, 424, 449, 451, 453, 455, 460, 491, 493, 495, 497, and 502 each coordinate Ca(2+).

Belongs to the protein kinase superfamily. CAMK Ser/Thr protein kinase family. CaMK subfamily. In terms of assembly, interacts with IPD3. Post-translationally, autophosphorylation. In terms of tissue distribution, highly expressed in roots. Expressed in root hairs and nodules. Expressed at low levels in flowers. Not detected in leaves or stems.

The protein localises to the nucleus. The enzyme catalyses L-seryl-[protein] + ATP = O-phospho-L-seryl-[protein] + ADP + H(+). It catalyses the reaction L-threonyl-[protein] + ATP = O-phospho-L-threonyl-[protein] + ADP + H(+). With respect to regulation, activated by calcium. Autophosphorylation may play an important role in the regulation of the kinase activity. In terms of biological role, during nodulation, plays a central role in bacterial infection and contributes to nodule organogenesis. Protein kinase that recognizes the calcium spiking induced by Nod factors and translates this signal to components controlling nodulation and mycorrhizal infection responses. May phosphorylate the NSP1 protein. Required in epidermal and cortical cells to promote infection thread (IT) formation in root hairs. This is Calcium and calcium/calmodulin-dependent serine/threonine-protein kinase DMI-3 from Medicago truncatula (Barrel medic).